A 460-amino-acid polypeptide reads, in one-letter code: Elongation factor 1-alpha (460 aa).

Glycine 2 is subject to N,N,N-trimethylglycine. Lysine 3 bears the N6,N6-dimethyllysine; alternate mark. Lysine 3 carries the N6-methyllysine; alternate modification. In terms of domain architecture, tr-type G spans 6–241; the sequence is KAHINVVVIG…DAIEQPKRPT (236 aa). Positions 15 to 22 are G1; it reads GHVDSGKS. A GTP-binding site is contributed by 15–22; that stretch reads GHVDSGKS. Position 31 is an N6-methyllysine (lysine 31). Residues 71–75 form a G2 region; that stretch reads GITID. N6,N6,N6-trimethyllysine is present on lysine 80. The segment at 92–95 is G3; sequence DAPG. GTP contacts are provided by residues 92–96 and 154–157; these read DAPGH and NKMD. Residues 154–157 are G4; sequence NKMD. The G5 stretch occupies residues 193–195; it reads SGF. Position 317 is an N6,N6-dimethyllysine; alternate (lysine 317). An N6-methyllysine; alternate modification is found at lysine 317. Lysine 391 is modified (N6-methyllysine).

The protein belongs to the TRAFAC class translation factor GTPase superfamily. Classic translation factor GTPase family. EF-Tu/EF-1A subfamily.

The protein resides in the cytoplasm. Functionally, this protein promotes the GTP-dependent binding of aminoacyl-tRNA to the A-site of ribosomes during protein biosynthesis. In Sordaria macrospora, this protein is Elongation factor 1-alpha (TEF).